A 633-amino-acid polypeptide reads, in one-letter code: Extracellular metalloproteinase 3 (633 aa).

Positions methionine 1–alanine 18 are cleaved as a signal peptide. The propeptide occupies histidine 19–serine 246. Residues asparagine 232 and asparagine 410 are each glycosylated (N-linked (GlcNAc...) asparagine). Histidine 429 provides a ligand contact to Zn(2+). The active site involves glutamate 430. Residue histidine 433 coordinates Zn(2+). Residues asparagine 480 and asparagine 622 are each glycosylated (N-linked (GlcNAc...) asparagine).

It belongs to the peptidase M36 family. Zn(2+) serves as cofactor.

The protein resides in the secreted. In terms of biological role, secreted metalloproteinase that allows assimilation of proteinaceous substrates and probably acts as a virulence factor. This Arthroderma gypseum (strain ATCC MYA-4604 / CBS 118893) (Microsporum gypseum) protein is Extracellular metalloproteinase 3 (MEP3).